The primary structure comprises 392 residues: MSLREITSPDEIRDTRSFSHLEWGAFLSIDDYNHREEIVLGHTPMCKNRLKSWGLYIEDGTRVAACETLERPALVQCKDGKIKSTSTFSIGAVFTPKEHRGKGYASVMMKQMASGIPFKPTLTDADIIKATGVSDVDQTLRVTPLWSDVGTFYEKFGWIGTTDLQYVFEVDGSASQNGVNGTPNGTNGTNGVNGHTNGTNGHSSAVKYLSEEDVYRLADVEASSFASDFEKFPFKGSYKCGIVPDRTVYEWHLARAKFLAKFAKVPEPKVFGAQIGDSWMAWHHMYNARELVILRAKLAKAEDLVELIAAAKNHLCKDGFSDQINKIILWEQEREWNHIVDGLSYDAIDQAIEKSQGKREHRGSSIPAVMFVEYKLQKDAMEFVDHGKLTWC.

The enzyme catalyses L-lysine + acetyl-CoA = N(6)-acetyl-L-lysine + CoA + H(+). Its pathway is amino-acid degradation; L-lysine degradation via acetylation pathway; glutarate from L-lysine: step 1/6. Its activity is regulated as follows. Activity is inhibited by 5-aminovalerate. In terms of biological role, lysine N-6-acetyl transferase (LAT) that catalyzes the first step of the lysine degradation pathway. The sequence is that of Lysine acetyltransferase from Yarrowia lipolytica (strain CLIB 122 / E 150) (Yeast).